A 107-amino-acid polypeptide reads, in one-letter code: CLAVATA3/ESR (CLE)-related protein 13 (107 aa).

Positions 1-25 (MATTRVSHVLGFLLWISLLIFVSIG) are cleaved as a signal peptide. N29 carries N-linked (GlcNAc...) asparagine glycosylation. Residues 79-107 (ALPAGGSEIDPRYGVEKRLVPSGPNPLHH) are disordered. Residues 87 to 97 (IDPRYGVEKRL) are compositionally biased toward basic and acidic residues. 2 positions are modified to hydroxyproline: P99 and P102. O-linked (Ara...) hydroxyproline glycosylation occurs at P102.

It belongs to the CLV3/ESR signal peptide family. In terms of processing, the O-glycosylation (arabinosylation) of the hydroxyproline Pro-102 enhances binding affinity of the CLE13p peptide for its receptor. In terms of tissue distribution, mostly expressed in seedlings, roots, flowers, stems and apex, and, to a lower extent, in leaves and siliques.

Its subcellular location is the secreted. The protein resides in the extracellular space. Its function is as follows. Extracellular signal peptide that regulates cell fate. Represses root apical meristem maintenance. Regulates the transition of protophloem cells from proliferation to differentiation, thus impinging on postembryonic growth capacity of the root meristem; this signaling pathway requires CRN and CLV2. The protein is CLAVATA3/ESR (CLE)-related protein 13 of Arabidopsis thaliana (Mouse-ear cress).